Here is a 134-residue protein sequence, read N- to C-terminus: Large ribosomal subunit protein uL16c (134 aa).

This sequence belongs to the universal ribosomal protein uL16 family. Part of the 50S ribosomal subunit.

The protein localises to the plastid. It is found in the chloroplast. This is Large ribosomal subunit protein uL16c from Solanum lycopersicum (Tomato).